A 386-amino-acid polypeptide reads, in one-letter code: 8-amino-7-oxononanoate synthase (386 aa).

A substrate-binding site is contributed by Arg-31. 109–110 (GY) is a pyridoxal 5'-phosphate binding site. Residue His-134 coordinates substrate. Pyridoxal 5'-phosphate-binding positions include Ser-180, 205–208 (DEAH), and 236–239 (TLSK). N6-(pyridoxal phosphate)lysine is present on Lys-239. Thr-349 serves as a coordination point for substrate.

Belongs to the class-II pyridoxal-phosphate-dependent aminotransferase family. BioF subfamily. As to quaternary structure, homodimer. Pyridoxal 5'-phosphate is required as a cofactor.

It catalyses the reaction 6-carboxyhexanoyl-[ACP] + L-alanine + H(+) = (8S)-8-amino-7-oxononanoate + holo-[ACP] + CO2. Its pathway is cofactor biosynthesis; biotin biosynthesis. Functionally, catalyzes the decarboxylative condensation of pimeloyl-[acyl-carrier protein] and L-alanine to produce 8-amino-7-oxononanoate (AON), [acyl-carrier protein], and carbon dioxide. The protein is 8-amino-7-oxononanoate synthase of Mycobacterium bovis (strain ATCC BAA-935 / AF2122/97).